The chain runs to 80 residues: Small ribosomal subunit protein uS17 (80 aa).

The protein belongs to the universal ribosomal protein uS17 family. In terms of assembly, part of the 30S ribosomal subunit.

In terms of biological role, one of the primary rRNA binding proteins, it binds specifically to the 5'-end of 16S ribosomal RNA. This is Small ribosomal subunit protein uS17 from Brucella abortus (strain S19).